We begin with the raw amino-acid sequence, 278 residues long: Large ribosomal subunit protein uL2c (278 aa).

The segment at 222-241 (GVVMNPNDHPHGGGEGRSPI) is disordered.

Belongs to the universal ribosomal protein uL2 family. As to quaternary structure, part of the 50S ribosomal subunit.

It localises to the plastid. It is found in the chloroplast. The sequence is that of Large ribosomal subunit protein uL2c (rpl2) from Tupiella akineta (Green alga).